We begin with the raw amino-acid sequence, 393 residues long: Probable acetyl-CoA acyltransferase (393 aa).

The Acyl-thioester intermediate role is filled by Cys88. Residues His349 and Cys378 each act as proton acceptor in the active site.

This sequence belongs to the thiolase-like superfamily. Thiolase family.

The protein localises to the cytoplasm. It catalyses the reaction 2 acetyl-CoA = acetoacetyl-CoA + CoA. The polypeptide is Probable acetyl-CoA acyltransferase (Staphylococcus aureus (strain bovine RF122 / ET3-1)).